The primary structure comprises 173 residues: 3-hydroxydecanoyl-[acyl-carrier-protein] dehydratase (173 aa).

His-71 is an active-site residue.

Belongs to the thioester dehydratase family. FabA subfamily. In terms of assembly, homodimer.

It localises to the cytoplasm. It carries out the reaction a (3R)-hydroxyacyl-[ACP] = a (2E)-enoyl-[ACP] + H2O. The enzyme catalyses (3R)-hydroxydecanoyl-[ACP] = (2E)-decenoyl-[ACP] + H2O. It catalyses the reaction (2E)-decenoyl-[ACP] = (3Z)-decenoyl-[ACP]. It functions in the pathway lipid metabolism; fatty acid biosynthesis. Functionally, necessary for the introduction of cis unsaturation into fatty acids. Catalyzes the dehydration of (3R)-3-hydroxydecanoyl-ACP to E-(2)-decenoyl-ACP and then its isomerization to Z-(3)-decenoyl-ACP. Can catalyze the dehydratase reaction for beta-hydroxyacyl-ACPs with saturated chain lengths up to 16:0, being most active on intermediate chain length. This is 3-hydroxydecanoyl-[acyl-carrier-protein] dehydratase from Bradyrhizobium sp. (strain BTAi1 / ATCC BAA-1182).